Reading from the N-terminus, the 195-residue chain is dITP/XTP pyrophosphatase (195 aa).

7 to 12 (SSNKGK) is a binding site for substrate. Residues glutamate 38 and aspartate 68 each coordinate Mg(2+). Aspartate 68 functions as the Proton acceptor in the catalytic mechanism. Residues serine 69, 150–153 (FGYD), lysine 173, and 178–179 (HR) contribute to the substrate site.

Belongs to the HAM1 NTPase family. In terms of assembly, homodimer. Mg(2+) serves as cofactor.

The enzyme catalyses XTP + H2O = XMP + diphosphate + H(+). It catalyses the reaction dITP + H2O = dIMP + diphosphate + H(+). The catalysed reaction is ITP + H2O = IMP + diphosphate + H(+). Its function is as follows. Pyrophosphatase that catalyzes the hydrolysis of nucleoside triphosphates to their monophosphate derivatives, with a high preference for the non-canonical purine nucleotides XTP (xanthosine triphosphate), dITP (deoxyinosine triphosphate) and ITP. Seems to function as a house-cleaning enzyme that removes non-canonical purine nucleotides from the nucleotide pool, thus preventing their incorporation into DNA/RNA and avoiding chromosomal lesions. In Nautilia profundicola (strain ATCC BAA-1463 / DSM 18972 / AmH), this protein is dITP/XTP pyrophosphatase.